The sequence spans 218 residues: GTP cyclohydrolase 1 (218 aa).

3 residues coordinate Zn(2+): Cys111, His114, and Cys182.

This sequence belongs to the GTP cyclohydrolase I family. In terms of assembly, toroid-shaped homodecamer, composed of two pentamers of five dimers.

The catalysed reaction is GTP + H2O = 7,8-dihydroneopterin 3'-triphosphate + formate + H(+). Its pathway is cofactor biosynthesis; 7,8-dihydroneopterin triphosphate biosynthesis; 7,8-dihydroneopterin triphosphate from GTP: step 1/1. In Buchnera aphidicola subsp. Schizaphis graminum (strain Sg), this protein is GTP cyclohydrolase 1.